The sequence spans 262 residues: Putative outer membrane protein CPn_1034/CP_0818/CPj1034/CpB1074 (262 aa).

The first 17 residues, 1 to 17 (MKTWLFFTFLFSCSSFY), serve as a signal peptide directing secretion.

The protein resides in the cell outer membrane. This is Putative outer membrane protein CPn_1034/CP_0818/CPj1034/CpB1074 from Chlamydia pneumoniae (Chlamydophila pneumoniae).